A 359-amino-acid polypeptide reads, in one-letter code: Stearoyl-CoA desaturase (359 aa).

Topologically, residues 1–72 (MPAHLLQEEI…EGPKPKLEYV (72 aa)) are cytoplasmic. Residues 73–93 (WRNIILMGLLHLGALYGITLI) form a helical membrane-spanning segment. Residue N75 participates in substrate binding. Over 94–97 (PTCK) the chain is Lumenal. Residues 98 to 118 (IYTFLWVLFYYMMSALGITAG) traverse the membrane as a helical segment. Residues 119–217 (VHRLWSHRTY…EKLVMFQRRY (99 aa)) are Cytoplasmic-facing. H120 and H125 together coordinate Fe cation. The short motif at 120–125 (HRLWSH) is the Histidine box-1 element. The substrate site is built by N148, R155, and D156. Fe cation-binding residues include H157, H160, and H161. The Histidine box-2 motif lies at 157–161 (HRAHH). Residues R188 and K189 each coordinate substrate. S203 carries the phosphoserine modification. A helical membrane pass occupies residues 218–237 (YKPGVLLLCFILPTLVPWYL). Over 238–241 (WGET) the chain is Lumenal. The helical transmembrane segment at 242 to 263 (FQNSLFFATLLRYAVVLNATWL) threads the bilayer. W262 serves as a coordination point for substrate. The Cytoplasmic segment spans residues 264–359 (VNSAAHMYGY…RTGEESCKSG (96 aa)). Fe cation-binding residues include H269, H298, H301, and H302. Positions 298 to 302 (HNYHH) match the Histidine box-3 motif.

Belongs to the fatty acid desaturase type 1 family. It depends on Fe(2+) as a cofactor.

Its subcellular location is the endoplasmic reticulum membrane. It catalyses the reaction octadecanoyl-CoA + 2 Fe(II)-[cytochrome b5] + O2 + 2 H(+) = (9Z)-octadecenoyl-CoA + 2 Fe(III)-[cytochrome b5] + 2 H2O. The catalysed reaction is hexadecanoyl-CoA + 2 Fe(II)-[cytochrome b5] + O2 + 2 H(+) = (9Z)-hexadecenoyl-CoA + 2 Fe(III)-[cytochrome b5] + 2 H2O. In terms of biological role, stearoyl-CoA desaturase that utilizes O(2) and electrons from reduced cytochrome b5 to introduce the first double bond into saturated fatty acyl-CoA substrates. Catalyzes the insertion of a cis double bond at the delta-9 position into fatty acyl-CoA substrates including palmitoyl-CoA and stearoyl-CoA. Gives rise to a mixture of 16:1 and 18:1 unsaturated fatty acids. Plays an important role in lipid biosynthesis. Plays an important role in regulating the expression of genes that are involved in lipogenesis and in regulating mitochondrial fatty acid oxidation. Plays an important role in body energy homeostasis. Contributes to the biosynthesis of membrane phospholipids, cholesterol esters and triglycerides. This is Stearoyl-CoA desaturase (SCD) from Capra hircus (Goat).